We begin with the raw amino-acid sequence, 297 residues long: Salivary glue protein Sgs-4 (297 aa).

Positions 1 to 21 are cleaved as a signal peptide; it reads MRLELLVVLLVGLAALAPSGS. Tandem repeats lie at residues 26-32, 33-39, 40-46, 47-53, 54-60, 61-67, 68-74, 75-81, 82-88, 89-95, 96-102, 103-109, 110-116, 117-123, 124-130, 131-137, 138-144, 145-151, 152-158, 159-165, and 166-172. The disordered stretch occupies residues 26–84; sequence TEPPRCETEPPRCETEPPRCETEPPRCETEPPRCETTTPKCETTPPTCRTEPPTCKTEP. The 22 X 7 AA approximate tandem repeats of T-[ETK]-[PT]-P-[RKT]-C-[ERK] stretch occupies residues 26–179; sequence TEPPRCETEP…TCKTEPPCEK (154 aa). Basic and acidic residues predominate over residues 27–58; the sequence is EPPRCETEPPRCETEPPRCETEPPRCETEPPR. Residues 59-84 show a composition bias toward low complexity; sequence CETTTPKCETTPPTCRTEPPTCKTEP. The segment covering 141 to 174 has biased composition (low complexity); that stretch reads PTCKTEPPTCRTEPPTCKTEPPTCKTEPPTCKTE. Disordered stretches follow at residues 141–218 and 243–297; these read PTCK…SGCG and PDSK…KGGC. One copy of the 22; approximate repeat lies at 173–179; the sequence is TEPPCEK. 2 stretches are compositionally biased toward basic residues: residues 181–208 and 282–291; these read CTKR…HHNR and NTTKKPRKTQ.

Salivary gland.

The protein resides in the secreted. This is Salivary glue protein Sgs-4 (Sgs4) from Drosophila melanogaster (Fruit fly).